We begin with the raw amino-acid sequence, 446 residues long: uncharacterized protein (446 aa).

12 helical membrane passes run 20-40, 42-62, 95-115, 127-147, 160-180, 205-225, 237-257, 284-304, 331-351, 355-375, 388-408, and 414-434; these read LIGV…IAIV, SGFS…FVFE, WVYW…ISLF, VFAS…LSVF, AAIF…LSGG, LIYA…AVHL, LMLA…LLLV, IFNG…LFAV, WPAL…SLVL, IYEH…LFIL, GKTQ…GTLF, and PGFF…MIYQ.

It belongs to the amino acid-polyamine-organocation (APC) superfamily.

The protein localises to the cell membrane. This is an uncharacterized protein from Bacillus subtilis (strain 168).